Here is a 401-residue protein sequence, read N- to C-terminus: All trans-polyprenyl-diphosphate synthase PDSS2 (401 aa).

It belongs to the FPP/GGPP synthase family. Heterotetramer composed of 2 PDSS1/DPS1 and 2 PDSS2/DLP1 subunits.

It is found in the mitochondrion. The catalysed reaction is 7 isopentenyl diphosphate + (2E,6E)-farnesyl diphosphate = all-trans-decaprenyl diphosphate + 7 diphosphate. The enzyme catalyses 6 isopentenyl diphosphate + (2E,6E)-farnesyl diphosphate = all-trans-nonaprenyl diphosphate + 6 diphosphate. It participates in cofactor biosynthesis; ubiquinone biosynthesis. Heterotetrameric enzyme that catalyzes the condensation of farnesyl diphosphate (FPP), which acts as a primer, and isopentenyl diphosphate (IPP) to produce prenyl diphosphates of varying chain lengths and participates in the determination of the side chain of ubiquinone. Supplies nona and decaprenyl diphosphate, the precursors for the side chain of the isoprenoid quinones ubiquinone-9 (Q9) and ubiquinone-10 (Q10) respectively. The enzyme adds isopentenyl diphosphate molecules sequentially to farnesyl diphosphate with trans stereochemistry. May play a role during cerebellar development. May regulate mitochondrial respiratory chain function. The chain is All trans-polyprenyl-diphosphate synthase PDSS2 from Rattus norvegicus (Rat).